The primary structure comprises 587 residues: ATF/CREB activator 2 (587 aa).

Disordered regions lie at residues 1–62, 123–144, 169–195, and 381–423; these read MFTG…SRSL, LRQQQQQDQRQQSPSMKTEEES, NLSQLSSTRKSAPNDSTTAPTNASNIA, and TGGE…IPGT. Residues 16–29 show a composition bias toward basic and acidic residues; it reads KQKDNNKRGIDDTS. 2 stretches are compositionally biased toward low complexity: residues 39-57 and 123-134; these read SVSDTSAAATTTSTMNNSA and LRQQQQQDQRQQ. Residues Ser171 and Ser179 each carry the phosphoserine modification. Basic and acidic residues predominate over residues 385-395; the sequence is NRGKSALRESH. The span at 396–418 shows a compositional bias: polar residues; sequence SNPSFTPKSQGSHLNLAANTQGN. At Ser399 the chain carries Phosphoserine. One can recognise a bZIP domain in the interval 425–488; that stretch reads AWKRARLLER…SKFKKFSKIH (64 aa). The basic motif stretch occupies residues 427-447; that stretch reads KRARLLERNRIAASKCRQRKK. A leucine-zipper region spans residues 453–467; it reads LQKEFNEIKDENRIL. The disordered stretch occupies residues 552–587; sequence SQRFGSDTDDDDIDLKPVEGGKDPDNQSLPNSEKIK. Phosphoserine is present on Ser557. Thr559 is modified (phosphothreonine). Over residues 565–576 the composition is skewed to basic and acidic residues; the sequence is DLKPVEGGKDPD. Positions 577–587 are enriched in polar residues; it reads NQSLPNSEKIK.

This sequence belongs to the bZIP family.

It is found in the nucleus. Functionally, transcriptional activator of promoters containing ATF/CREB sites. Can independently stimulate transcription through ATF/CREB sites. Important for a variety of biological functions including growth on non-optimal carbon sources. This chain is ATF/CREB activator 2 (CST6), found in Saccharomyces cerevisiae (strain ATCC 204508 / S288c) (Baker's yeast).